Consider the following 94-residue polypeptide: Co-chaperonin GroES (94 aa).

Belongs to the GroES chaperonin family. In terms of assembly, heptamer of 7 subunits arranged in a ring. Interacts with the chaperonin GroEL.

The protein localises to the cytoplasm. Together with the chaperonin GroEL, plays an essential role in assisting protein folding. The GroEL-GroES system forms a nano-cage that allows encapsulation of the non-native substrate proteins and provides a physical environment optimized to promote and accelerate protein folding. GroES binds to the apical surface of the GroEL ring, thereby capping the opening of the GroEL channel. This is Co-chaperonin GroES from Bacillus subtilis (strain 168).